The primary structure comprises 39 residues: Natriuretic peptide NsNP-b (39 aa).

Positions 1–8 (SGSKTAKI) are excised as a propeptide. Cysteines 12 and 28 form a disulfide. The interval 19 to 39 (RIGSTSGMGCGSVPKPTPGGS) is disordered.

It belongs to the natriuretic peptide family. Expressed by the venom gland.

It localises to the secreted. Snake venom natriuretic peptide that targets both NPR1 and NPR2. Exhibits hypotensive and vasodepressor activities. In Notechis scutatus scutatus (Mainland tiger snake), this protein is Natriuretic peptide NsNP-b.